The chain runs to 231 residues: Quercetin 2,3-dioxygenase (231 aa).

Residues H57, H59, H101, and E103 each coordinate a divalent metal cation.

This sequence belongs to the pirin family. The cofactor is Zn(2+). Co(2+) serves as cofactor. Fe(2+) is required as a cofactor.

The enzyme catalyses quercetin + O2 = 2-(3,4-dihydroxybenzoyloxy)-4,6-dihydroxybenzoate + CO. The protein operates within flavonoid metabolism; quercetin degradation. With respect to regulation, inhibited by kojic acid, sodium diethyldithiocarbamate and 1,10-phenanthroline monohydrochloride. Has quercetin 2,3-dioxygenase activity in vitro. Its physiological role is unknown; however, may provide a mechanism that would avoid inhibition of key cellular proteins, such as DNA gyrase, by quercetin. This chain is Quercetin 2,3-dioxygenase (yhhW), found in Escherichia coli (strain K12).